The chain runs to 480 residues: Phosphoglucosamine mutase (480 aa).

Residues 1-41 (MPKHTKKDPREGAPSATGEPQKQAAGRKLFGTDGVRGVANQ) form a disordered region. Ser127 serves as the catalytic Phosphoserine intermediate. Mg(2+)-binding residues include Ser127, Asp269, Asp271, and Asp273. Ser127 is modified (phosphoserine).

The protein belongs to the phosphohexose mutase family. It depends on Mg(2+) as a cofactor. In terms of processing, activated by phosphorylation.

The enzyme catalyses alpha-D-glucosamine 1-phosphate = D-glucosamine 6-phosphate. Its function is as follows. Catalyzes the conversion of glucosamine-6-phosphate to glucosamine-1-phosphate. In Sorangium cellulosum (strain So ce56) (Polyangium cellulosum (strain So ce56)), this protein is Phosphoglucosamine mutase.